Consider the following 594-residue polypeptide: MEPTPFPSWQDVASALVATAAGRAPADLVIRGAKVVLVQTREVMDGWDVAIKHGRFAYVGPDASHCIGEDTQVEELSGHYLIPGLCDGHMHIESGMLTPAEFTRAVIPHGTTSMFTDPHEIANVFGLRGVRLMHDEALLQPINVFTQMPSCAPSAPGLETTGFEIGPDDVSEAMAWPGIVGLGEMMNFPGVVNGSQQMLAEIAATQAAGKTVGGHYASPDLGPAFHAYAAGGPADDHEGTSETDAMARMRQGMRSMIRLGSAWYDIESQITAITERGLDPRNMIICTDDCFAKTLVEDGHMNRAVRHAIDCGCDPLIALQMATINTATHFGLEREIGQIAPGRRADMIVTRDLRTLPIEVVYARGQRVAQFGECLVECPHLDWPTDTRHSVNLGKSLTAADFEIRSDAAEVTANVIGVVENQAPTKALTQTLPVRHGVVEPDGIAQIALVERHRGTGGVTNAFVSGFGYGPGMAMASTVAHDSHHMIVVGTDRAMMAKAAMRLGEVGGGITLWQDGTERALVELPIAGLMSDRPATEVAAKVTQLVEAMEAAGCTLNNAYMQHSLLALVVIPELRISDLGLVDVRTFELTPVLP.

It belongs to the metallo-dependent hydrolases superfamily. Adenine deaminase family. Requires Mn(2+) as cofactor.

The enzyme catalyses adenine + H2O + H(+) = hypoxanthine + NH4(+). The sequence is that of Adenine deaminase 1 from Jannaschia sp. (strain CCS1).